Here is a 342-residue protein sequence, read N- to C-terminus: Alpha-(1,3)-fucosyltransferase 7 (342 aa).

Residues 1 to 11 (MQNAGLSPTPS) are Cytoplasmic-facing. Residues 12–31 (LRALGGLAMAALLSTVWLWW) form a helical; Signal-anchor for type II membrane protein membrane-spanning segment. Residues 32–342 (RLGAAPGGAP…YQDLEGWFQA (311 aa)) lie on the Extracellular side of the membrane. Cys68 and Cys76 are disulfide-bonded. N-linked (GlcNAc...) asparagine glycosylation occurs at Asn81. Cys211 and Cys214 are oxidised to a cystine. Asn291 is a glycosylation site (N-linked (GlcNAc...) asparagine). Cys318 and Cys321 are joined by a disulfide.

Belongs to the glycosyltransferase 10 family. Post-translationally, N-glycosylated. Expressed in thymus, spleen, liver and lung. Highly expressed in the thymus and lower expressed in the lung.

It is found in the membrane. It carries out the reaction an N-acetyl-alpha-neuraminyl-(2-&gt;3)-beta-D-galactosyl-(1-&gt;4)-N-acetyl-beta-D-glucosaminyl derivative + GDP-beta-L-fucose = an alpha-Neu5Ac-(2-&gt;3)-beta-D-Gal-(1-&gt;4)-[alpha-L-Fuc-(1-&gt;3)]-beta-D-GlcNAc derivative + GDP + H(+). It catalyses the reaction a neolactoside IV(3)-alpha-NeuAc-nLc4Cer + GDP-beta-L-fucose = a neolactoside IV(3)-alpha-NeuNAc,III(3)-alpha-Fuc-nLc4Cer + GDP + H(+). The catalysed reaction is a neolactoside VI(3)-alpha-NeuNAc-nLc6Cer + GDP-beta-L-fucose = a neolactoside VI(3)-alpha-NeuAc,V(3)-alphaFuc-nLc6Cer + GDP + H(+). The enzyme catalyses an alpha-Neu5Ac-(2-&gt;3)-beta-D-Gal-(1-&gt;4)-beta-D-GlcNAc-(1-&gt;3)-beta-D-Gal-(1-&gt;4)-[alpha-L-Fuc-(1-&gt;3)]-beta-D-GlcNAc derivative + GDP-beta-L-fucose = an alpha-Neu5Ac-(2-&gt;3)-beta-D-Gal-(1-&gt;4)-[alpha-L-Fuc-(1-&gt;3)]-beta-D-GlcNAc-(1-&gt;3)-beta-D-Gal-(1-&gt;4)-[alpha-L-Fuc-(1-&gt;3)]-beta-D-GlcNAc derivative + GDP + H(+). It carries out the reaction an alpha-Neu5Ac-(2-&gt;3)-beta-D-Gal-(1-&gt;4)-beta-D-GlcNAc6S derivative + GDP-beta-L-fucose = an alpha-Neu5Ac-(2-&gt;3)-beta-D-Gal-(1-&gt;4)-[alpha-L-Fuc-(1-&gt;3)]-beta-D-GlcNAc6S derivative + GDP + H(+). It catalyses the reaction alpha-Neu5Ac-(2-&gt;3)-beta-D-Gal-(1-&gt;4)-beta-D-GlcNAc-(1-&gt;3)-beta-D-Gal-(1-&gt;4)-D-Glc + GDP-beta-L-fucose = alpha-Neu5Ac-(2-&gt;3)-beta-D-Gal-(1-&gt;4)-[alpha-L-Fuc-(1-&gt;3)]-beta-D-GlcNAc-(1-&gt;3)-beta-D-Gal-(1-&gt;4)-D-Glc + GDP + H(+). The catalysed reaction is alpha-Neu5Ac-(2-&gt;3)-beta-D-Gal-(1-&gt;4)-beta-D-GlcNAc-(1-&gt;3)-beta-D-Gal-(1-&gt;4)-[alpha-L-Fuc-(1-&gt;3)]-beta-D-GlcNAc-(1-&gt;3)-beta-D-Gal-(1-&gt;4)-beta-D-GlcNAc + GDP-beta-L-fucose = alpha-Neu5Ac-(2-&gt;3)-beta-D-Gal-(1-&gt;4)-[alpha-L-Fuc-(1-&gt;3)]-beta-D-GlcNAc-(1-&gt;3)-beta-D-Gal-(1-&gt;4)-[alpha-L-Fuc-(1-&gt;3)]-beta-D-GlcNAc-(1-&gt;3)-beta-D-Gal-(1-&gt;4)-beta-D-GlcNAc + GDP + H(+). The enzyme catalyses alpha-Neu5Ac-(2-&gt;3)-beta-D-Gal-(1-&gt;4)-beta-D-GlcNAc-(1-&gt;3)-beta-D-Gal-(1-&gt;4)-beta-D-GlcNAc-(1-&gt;3)-beta-D-Gal-(1-&gt;4)-beta-D-GlcNAc + GDP-beta-L-fucose = alpha-Neu5Ac-(2-&gt;3)-beta-D-Gal-(1-&gt;4)-[alpha-L-Fuc-(1-&gt;3)]-beta-D-GlcNAc-(1-&gt;3)-beta-D-Gal-(1-&gt;4)-beta-D-GlcNAc-(1-&gt;3)-beta-D-Gal-(1-&gt;4)-beta-D-GlcNAc + GDP + H(+). It functions in the pathway protein modification; protein glycosylation. With respect to regulation, inhibited by NaCl. Inhibited by GDP in a concentration dependent manner, with an IC(50) value of 93 uM. Also inhibited by GMP and GTP. Inhibited by N-ethylmaleimide. Activated by poly(ethylene glycol) by enhancing the thermal stability of FUT7. Activated by Mn2+, Ca2+, and Mg2+. Both panosialin A and B inhibit activity with IC(50) values of 4.8 and 5.3 ug/ml, respectively. Inhibited by gallic acid (GA) and (-)-epigallocatechin gallate (EGCG) in a time-dependent and irreversible manner with IC(50) values of 60 and 700 nM, respectively. Catalyzes the transfer of L-fucose, from a guanosine diphosphate-beta-L-fucose, to the N-acetyl glucosamine (GlcNAc) of a distal alpha2,3 sialylated lactosamine unit of a glycoprotein or a glycolipid-linked sialopolylactosamines chain through an alpha-1,3 glycosidic linkage and participates in the final fucosylation step in the biosynthesis of the sialyl Lewis X (sLe(x)), a carbohydrate involved in cell and matrix adhesion during leukocyte trafficking and fertilization. In vitro, also synthesizes sialyl-dimeric-Lex structures, from VIM-2 structures and both di-fucosylated and trifucosylated structures from mono-fucosylated precursors. However does not catalyze alpha 1-3 fucosylation when an internal alpha 1-3 fucosylation is present in polylactosamine chain and the fucosylation rate of the internal GlcNAc residues is reduced once fucose has been added to the distal GlcNAc. Also catalyzes the transfer of a fucose from GDP-beta-fucose to the 6-sulfated a(2,3)sialylated substrate to produce 6-sulfo sLex mediating significant L-selectin-dependent cell adhesion. Through sialyl-Lewis(x) biosynthesis, can control SELE- and SELP-mediated cell adhesion with leukocytes and allows leukocytes tethering and rolling along the endothelial tissue thereby enabling the leukocytes to accumulate at a site of inflammation. May enhance embryo implantation through sialyl Lewis X (sLeX)-mediated adhesion of embryo cells to endometrium. May affect insulin signaling by up-regulating the phosphorylation and expression of some signaling molecules involved in the insulin-signaling pathway through SLe(x) which is present on the glycans of the INSRR alpha subunit. The polypeptide is Alpha-(1,3)-fucosyltransferase 7 (Bos taurus (Bovine)).